Here is a 574-residue protein sequence, read N- to C-terminus: Proline--tRNA ligase (574 aa).

This sequence belongs to the class-II aminoacyl-tRNA synthetase family. ProS type 1 subfamily. Homodimer.

The protein localises to the cytoplasm. The catalysed reaction is tRNA(Pro) + L-proline + ATP = L-prolyl-tRNA(Pro) + AMP + diphosphate. In terms of biological role, catalyzes the attachment of proline to tRNA(Pro) in a two-step reaction: proline is first activated by ATP to form Pro-AMP and then transferred to the acceptor end of tRNA(Pro). As ProRS can inadvertently accommodate and process non-cognate amino acids such as alanine and cysteine, to avoid such errors it has two additional distinct editing activities against alanine. One activity is designated as 'pretransfer' editing and involves the tRNA(Pro)-independent hydrolysis of activated Ala-AMP. The other activity is designated 'posttransfer' editing and involves deacylation of mischarged Ala-tRNA(Pro). The misacylated Cys-tRNA(Pro) is not edited by ProRS. The polypeptide is Proline--tRNA ligase (Nitratidesulfovibrio vulgaris (strain DP4) (Desulfovibrio vulgaris)).